Here is a 569-residue protein sequence, read N- to C-terminus: Glutamate--tRNA ligase (569 aa).

The 'HIGH' region signature appears at 110–120 (PNPNGPPTLGS).

This sequence belongs to the class-I aminoacyl-tRNA synthetase family. Glutamate--tRNA ligase type 2 subfamily.

It localises to the cytoplasm. The enzyme catalyses tRNA(Glu) + L-glutamate + ATP = L-glutamyl-tRNA(Glu) + AMP + diphosphate. Catalyzes the attachment of glutamate to tRNA(Glu) in a two-step reaction: glutamate is first activated by ATP to form Glu-AMP and then transferred to the acceptor end of tRNA(Glu). In Methanococcoides burtonii (strain DSM 6242 / NBRC 107633 / OCM 468 / ACE-M), this protein is Glutamate--tRNA ligase.